Reading from the N-terminus, the 102-residue chain is Small ribosomal subunit protein uS10 (102 aa).

This sequence belongs to the universal ribosomal protein uS10 family. As to quaternary structure, part of the 30S ribosomal subunit.

Its function is as follows. Involved in the binding of tRNA to the ribosomes. This is Small ribosomal subunit protein uS10 from Pelagibacter ubique (strain HTCC1062).